We begin with the raw amino-acid sequence, 176 residues long: Protein GrpE (176 aa).

It belongs to the GrpE family. As to quaternary structure, homodimer.

Its subcellular location is the cytoplasm. Its function is as follows. Participates actively in the response to hyperosmotic and heat shock by preventing the aggregation of stress-denatured proteins, in association with DnaK and GrpE. It is the nucleotide exchange factor for DnaK and may function as a thermosensor. Unfolded proteins bind initially to DnaJ; upon interaction with the DnaJ-bound protein, DnaK hydrolyzes its bound ATP, resulting in the formation of a stable complex. GrpE releases ADP from DnaK; ATP binding to DnaK triggers the release of the substrate protein, thus completing the reaction cycle. Several rounds of ATP-dependent interactions between DnaJ, DnaK and GrpE are required for fully efficient folding. The polypeptide is Protein GrpE (Rickettsia bellii (strain OSU 85-389)).